Reading from the N-terminus, the 366-residue chain is NADH-quinone oxidoreductase subunit D (366 aa).

This sequence belongs to the complex I 49 kDa subunit family. As to quaternary structure, NDH-1 is composed of 14 different subunits. Subunits NuoB, C, D, E, F, and G constitute the peripheral sector of the complex.

Its subcellular location is the cell membrane. It catalyses the reaction a quinone + NADH + 5 H(+)(in) = a quinol + NAD(+) + 4 H(+)(out). NDH-1 shuttles electrons from NADH, via FMN and iron-sulfur (Fe-S) centers, to quinones in the respiratory chain. The immediate electron acceptor for the enzyme in this species is believed to be a menaquinone. Couples the redox reaction to proton translocation (for every two electrons transferred, four hydrogen ions are translocated across the cytoplasmic membrane), and thus conserves the redox energy in a proton gradient. This Bacillus cereus (strain ATCC 10987 / NRS 248) protein is NADH-quinone oxidoreductase subunit D.